A 157-amino-acid polypeptide reads, in one-letter code: Ribonuclease H (157 aa).

Residues 1–142 (MKKKIKIFID…CDFLAKISAK (142 aa)) enclose the RNase H type-1 domain. Residues Asp-10, Glu-48, Asp-70, and Asp-134 each contribute to the Mg(2+) site.

The protein belongs to the RNase H family. As to quaternary structure, monomer. It depends on Mg(2+) as a cofactor.

It is found in the cytoplasm. It carries out the reaction Endonucleolytic cleavage to 5'-phosphomonoester.. Its function is as follows. Endonuclease that specifically degrades the RNA of RNA-DNA hybrids. The protein is Ribonuclease H of Wigglesworthia glossinidia brevipalpis.